The following is a 232-amino-acid chain: Cytidylate kinase (232 aa).

Residue G11 to T19 participates in ATP binding.

The protein belongs to the cytidylate kinase family. Type 1 subfamily.

It localises to the cytoplasm. The catalysed reaction is CMP + ATP = CDP + ADP. The enzyme catalyses dCMP + ATP = dCDP + ADP. The protein is Cytidylate kinase of Desulfitobacterium hafniense (strain Y51).